The following is a 700-amino-acid chain: Putative proline-rich receptor-like protein kinase PERK6 (700 aa).

Residues 1 to 180 (MAEGQSPENS…SGGGSNSSGN (180 aa)) form a disordered region. Topologically, residues 1–186 (MAEGQSPENS…SSGNNEPNTA (186 aa)) are extracellular. Composition is skewed to pro residues over residues 9–19 (NSPPSPTPPSP) and 29–47 (SPPP…PPPD). The segment covering 48–137 (DSSNGSPQPP…GNNNDNNNQN (90 aa)) has biased composition (low complexity). N-linked (GlcNAc...) asparagine glycosylation is present at Asn-176. The helical transmembrane segment at 187–207 (AIVGIVAGAGLLFLVMILFCV) threads the bilayer. Residues 208–700 (CCCRKKKKKH…NNKTTPSRDH (493 aa)) lie on the Cytoplasmic side of the membrane. A disordered region spans residues 249–315 (NLSQQYPGSN…GPSVPPPHPS (67 aa)). Over residues 255–265 (PGSNGNNNWMN) the composition is skewed to low complexity. The span at 266 to 286 (SPPPPPPGSWQPSPPPPPPPV) shows a compositional bias: pro residues. A Phosphothreonine modification is found at Thr-326. A Protein kinase domain is found at 337–615 (FSQSRLLGQG…VRALEGDATL (279 aa)). ATP is bound by residues 343 to 351 (LGQGGFGYV) and Lys-365. The residue at position 410 (Tyr-410) is a Phosphotyrosine. The Proton acceptor role is filled by Asp-461. Ser-465 and Ser-494 each carry phosphoserine. A phosphothreonine mark is found at Thr-495 and Thr-500. Residue Tyr-508 is modified to Phosphotyrosine. Disordered stretches follow at residues 616–642 (DDLS…DSST) and 659–700 (EYGA…SRDH). The span at 689–700 (ANNNKTTPSRDH) shows a compositional bias: polar residues.

The protein belongs to the protein kinase superfamily. Ser/Thr protein kinase family. Mostly expressed in flower buds.

Its subcellular location is the cell membrane. It catalyses the reaction L-seryl-[protein] + ATP = O-phospho-L-seryl-[protein] + ADP + H(+). The catalysed reaction is L-threonyl-[protein] + ATP = O-phospho-L-threonyl-[protein] + ADP + H(+). This is Putative proline-rich receptor-like protein kinase PERK6 (PERK6) from Arabidopsis thaliana (Mouse-ear cress).